We begin with the raw amino-acid sequence, 502 residues long: CBL-interacting protein kinase 11 (502 aa).

In terms of domain architecture, Protein kinase spans 12 to 267 (YEVGKQLGQG…IPRIKRSTWY (256 aa)). ATP is bound by residues 18 to 26 (LGQGTFAKV) and K41. D135 (proton acceptor) is an active-site residue. Residues 153-182 (DFGLSALAESKRQDGLLHTTCGTPAYVAPE) form an activation loop region. In terms of domain architecture, NAF spans 297–333 (AECSTSEENQGSLSLPNLNAFDIISLSTGFNLSGFFE). A PPI region spans residues 339-367 (QEERFTTRQPVTTVLGKLKELAKRLKLKV). The segment at 447–502 (LQGEQQQSPLPPELPQDQLQPSLPQQEKQDMPEPPLLPQVPQEEVQTSIPAEQTKN) is disordered. Over residues 461 to 472 (PQDQLQPSLPQQ) the composition is skewed to low complexity. A compositionally biased stretch (polar residues) spans 493–502 (TSIPAEQTKN).

It belongs to the protein kinase superfamily. CAMK Ser/Thr protein kinase family. SNF1 subfamily. The cofactor is Mn(2+).

The catalysed reaction is L-seryl-[protein] + ATP = O-phospho-L-seryl-[protein] + ADP + H(+). It catalyses the reaction L-threonyl-[protein] + ATP = O-phospho-L-threonyl-[protein] + ADP + H(+). Its function is as follows. CIPK serine-threonine protein kinases interact with CBL proteins. Binding of a CBL protein to the regulatory NAF domain of CIPK protein lead to the activation of the kinase in a calcium-dependent manner. The protein is CBL-interacting protein kinase 11 (CIPK11) of Oryza sativa subsp. japonica (Rice).